The sequence spans 202 residues: CASP-like protein 2B2 (202 aa).

Residues 1–29 (MSYLGVGVSPGNVPVYHGMNLKVIDRRVR) are Cytoplasmic-facing. Residues 30-50 (LAELVLRCVICALGVLAAVLV) traverse the membrane as a helical segment. Residues 51–72 (GTDTQVKEIFSIQKKARFTDMK) are Extracellular-facing. A helical transmembrane segment spans residues 73–93 (ALVFLVVANGIAAAYSLVQGV). The Cytoplasmic portion of the chain corresponds to 94 to 118 (RCVVGMVKGSVLFSKPLAWVIFSGD). Residues 119-139 (QMMAYLTLSAVAAAVQSASFA) traverse the membrane as a helical segment. Residues 140-164 (KLGQPDLQWMKICNMYGKFCNQVGE) lie on the Extracellular side of the membrane. Residues 165–185 (GIASALLVSVSMVVLSCISSF) traverse the membrane as a helical segment. Over 186-202 (SLFRLYGGNKGKDGARW) the chain is Cytoplasmic.

Belongs to the Casparian strip membrane proteins (CASP) family. Homodimer and heterodimers.

It localises to the cell membrane. The polypeptide is CASP-like protein 2B2 (Populus trichocarpa (Western balsam poplar)).